Consider the following 427-residue polypeptide: Phosphoribosylamine--glycine ligase (427 aa).

The region spanning 110 to 315 (KDFCQRHGLP…IVPILLAAAK (206 aa)) is the ATP-grasp domain. 136–196 (LDTLEAPFVI…EEFMHGEEAS (61 aa)) contributes to the ATP binding site. Residues Glu-285 and Asn-287 each coordinate Mg(2+).

The protein belongs to the GARS family. The cofactor is Mg(2+). It depends on Mn(2+) as a cofactor.

The catalysed reaction is 5-phospho-beta-D-ribosylamine + glycine + ATP = N(1)-(5-phospho-beta-D-ribosyl)glycinamide + ADP + phosphate + H(+). Its pathway is purine metabolism; IMP biosynthesis via de novo pathway; N(1)-(5-phospho-D-ribosyl)glycinamide from 5-phospho-alpha-D-ribose 1-diphosphate: step 2/2. The chain is Phosphoribosylamine--glycine ligase from Caulobacter vibrioides (strain ATCC 19089 / CIP 103742 / CB 15) (Caulobacter crescentus).